The chain runs to 303 residues: UDP-3-O-acyl-N-acetylglucosamine deacetylase (303 aa).

Zn(2+) is bound by residues H78, H237, and D241. H264 functions as the Proton donor in the catalytic mechanism.

This sequence belongs to the LpxC family. Requires Zn(2+) as cofactor.

The enzyme catalyses a UDP-3-O-[(3R)-3-hydroxyacyl]-N-acetyl-alpha-D-glucosamine + H2O = a UDP-3-O-[(3R)-3-hydroxyacyl]-alpha-D-glucosamine + acetate. It functions in the pathway glycolipid biosynthesis; lipid IV(A) biosynthesis; lipid IV(A) from (3R)-3-hydroxytetradecanoyl-[acyl-carrier-protein] and UDP-N-acetyl-alpha-D-glucosamine: step 2/6. Its function is as follows. Catalyzes the hydrolysis of UDP-3-O-myristoyl-N-acetylglucosamine to form UDP-3-O-myristoylglucosamine and acetate, the committed step in lipid A biosynthesis. This chain is UDP-3-O-acyl-N-acetylglucosamine deacetylase, found in Pseudomonas aeruginosa (strain LESB58).